A 281-amino-acid polypeptide reads, in one-letter code: Bifunctional protein FolD (281 aa).

NADP(+) contacts are provided by residues 165–167, Thr192, and Val233; that span reads GRG.

Belongs to the tetrahydrofolate dehydrogenase/cyclohydrolase family. In terms of assembly, homodimer.

The catalysed reaction is (6R)-5,10-methylene-5,6,7,8-tetrahydrofolate + NADP(+) = (6R)-5,10-methenyltetrahydrofolate + NADPH. It carries out the reaction (6R)-5,10-methenyltetrahydrofolate + H2O = (6R)-10-formyltetrahydrofolate + H(+). Its pathway is one-carbon metabolism; tetrahydrofolate interconversion. Its function is as follows. Catalyzes the oxidation of 5,10-methylenetetrahydrofolate to 5,10-methenyltetrahydrofolate and then the hydrolysis of 5,10-methenyltetrahydrofolate to 10-formyltetrahydrofolate. The polypeptide is Bifunctional protein FolD (Mycobacterium marinum (strain ATCC BAA-535 / M)).